A 216-amino-acid chain; its full sequence is UPF0598 protein C8orf82 (216 aa).

It belongs to the UPF0598 family.

This Homo sapiens (Human) protein is UPF0598 protein C8orf82 (C8orf82).